The following is a 186-amino-acid chain: Large ribosomal subunit protein bL9 (186 aa).

Residues 151–167 (PEEAEKQARGEAIMREE) are compositionally biased toward basic and acidic residues. The disordered stretch occupies residues 151–186 (PEEAEKQARGEAIMREESEYELETGEEVAEGPEQTA). Positions 168–180 (SEYELETGEEVAE) are enriched in acidic residues.

The protein belongs to the bacterial ribosomal protein bL9 family.

Its function is as follows. Binds to the 23S rRNA. In Acidiphilium cryptum (strain JF-5), this protein is Large ribosomal subunit protein bL9.